Here is a 512-residue protein sequence, read N- to C-terminus: MAAIGVLKVPPSSSSSSSSSSSKAIARNLSFTSSHLSGDKIFTLSGRTRRTSGRNPFIVSPKAVSDSKNSQTCLDPDASRSVLGIILGGGAGTRLYPLTKKRAKPAVPLGANYRLIDIPVSNCLNSNISKIYVLTQFNSASLNRHLSRAYASNLGGYKNEGFVEVLAAQQSPENPNWFQGTADAVRQYLWLFEEHNVLEYLVLAGDHLYRMDYERFIQAHRESDADITVAALPMDEARATAFGLMKIDEEGRIIEFSENPKGEQLKAMKVDTTILGLDDDRAKEMPYIASMGIYVVSKHVMLDLLRDKFPGANDFGSEVIPGATELGMRVQAYLYDGYWEDIGTIEAFYNANLGITKKPVPDFSFYDRSSPIYTQPRYLPPSKMLDADITDSVIGEGCVIKNCKIHHSVVGLRSCISEGAIIEDTLLMGADYYETDADRRFLAAKGGVPIGIGKNSHIRRAIIDKNARIGDDVKIINSDNVQEAARETEGYFIKSGIVTVIKDALIPSGTVI.

Residues 1–21 form a disordered region; it reads MAAIGVLKVPPSSSSSSSSSS. Residues 1-63 constitute a chloroplast transit peptide; it reads MAAIGVLKVP…RNPFIVSPKA (63 aa). Positions 12-21 are enriched in low complexity; sequence SSSSSSSSSS.

The protein belongs to the bacterial/plant glucose-1-phosphate adenylyltransferase family. Heterotetramer. As to expression, leaves and seeds.

Its subcellular location is the plastid. The protein resides in the chloroplast. The enzyme catalyses alpha-D-glucose 1-phosphate + ATP + H(+) = ADP-alpha-D-glucose + diphosphate. Its pathway is glycan biosynthesis; starch biosynthesis. Its activity is regulated as follows. Activated by 3'phosphoglycerate, inhibited by orthophosphate. Allosteric regulation. Its function is as follows. This protein plays a role in synthesis of starch. It catalyzes the synthesis of the activated glycosyl donor, ADP-glucose from Glc-1-P and ATP. The polypeptide is Glucose-1-phosphate adenylyltransferase small subunit 2, chloroplastic (AGPP) (Vicia faba (Broad bean)).